The following is a 699-amino-acid chain: Elongation factor G (699 aa).

In terms of domain architecture, tr-type G spans 8–283; it reads EHIRNIGICA…AIVDFLPSPI (276 aa). Residues 17-24, 81-85, and 135-138 each bind GTP; these read AHIDAGKT, DTPGH, and NKMD.

The protein belongs to the TRAFAC class translation factor GTPase superfamily. Classic translation factor GTPase family. EF-G/EF-2 subfamily.

The protein resides in the cytoplasm. Its function is as follows. Catalyzes the GTP-dependent ribosomal translocation step during translation elongation. During this step, the ribosome changes from the pre-translocational (PRE) to the post-translocational (POST) state as the newly formed A-site-bound peptidyl-tRNA and P-site-bound deacylated tRNA move to the P and E sites, respectively. Catalyzes the coordinated movement of the two tRNA molecules, the mRNA and conformational changes in the ribosome. In Rickettsia typhi (strain ATCC VR-144 / Wilmington), this protein is Elongation factor G.